The primary structure comprises 355 residues: MADKSHVNNVPMQGNGAYSSHAALQHEAMLKALPLFRAAAEAISKVDSTRVAIVEYGSAHGNNSLEPMEAILKSIHARSLELLFSDRPENDFCTLSKTVTEWADGLVENQLLHPLFISMIPRSFYQQVIPPKSAHLGFSLAALHHLDHVPQPTEDGQDESKLLQRQAHVDLATFLKLRSKEIVSGGSLILSFVGQASAGYENYGGPVDACRNAMIQMVQQDKIPVSVAQAFRVPTYNRTLSDVKKLMDEFTQIWKVHDLFEDDVMHPAFYELKIQSNPSQEASHKYAEIVIDWMMAVCSGYFTKALQVGSQGGYTKEEEESLLQDWVTRTKELFIRDHKDEEVICSFIYIRLERL.

S-adenosyl-L-homocysteine-binding residues include Y18, N63, D86, S123, and F124. Mg(2+) is bound at residue F231.

The protein belongs to the methyltransferase superfamily. Type-7 methyltransferase family. The cofactor is Mg(2+).

It participates in mycotoxin biosynthesis. Functionally, methyltransferase; part of the gene cluster that mediates the biosynthesis of the mycotoxin fusarin C. Within the cluster, FUS1, FUS2, FUS8 and FUS9 are sufficient for fusarin production. The roles of the other FUS members are yet undetermined. The fusarin C synthetase FUS1 is responsible for the condensation of one acetyl-coenzyme A (CoA) unit with six malonyl-CoA units and the amide linkage of the arising heptaketide and homoserine, subsequently releasing the first intermediate, prefusarin, as an alcohol with an open ring structure. The cytochrome P450 monooxygenase FUS8 participates in multiple oxidation processes at carbon C-20 and is able to use the FUS1 product as substrate, resulting in formation of 20-hydroxy-prefusarin. This reaction seems to be essential before the 2-pyrrolidone ring closure can be catalyzed by FUS2, generating 20-hydroxy-fusarin. FUS8 is able to further oxidizes carbon C-20 after ring closure, resulting in the formation of carboxy-fusarin C. As the last step, FUS9 methylates the hydroxyl group at C-21 to generate fusarin C. Fusarin C can then rearrange to epi-fusarin C, the (z)-isomers, and fusarin A and fusarin D. This chain is Methyltransferase FUS9, found in Gibberella moniliformis (strain M3125 / FGSC 7600) (Maize ear and stalk rot fungus).